We begin with the raw amino-acid sequence, 180 residues long: Large ribosomal subunit protein uL10 (180 aa).

It belongs to the universal ribosomal protein uL10 family. As to quaternary structure, part of the ribosomal stalk of the 50S ribosomal subunit. The N-terminus interacts with L11 and the large rRNA to form the base of the stalk. The C-terminus forms an elongated spine to which L12 dimers bind in a sequential fashion forming a multimeric L10(L12)X complex.

Its function is as follows. Forms part of the ribosomal stalk, playing a central role in the interaction of the ribosome with GTP-bound translation factors. This is Large ribosomal subunit protein uL10 (rplJ) from Treponema pallidum (strain Nichols).